The sequence spans 150 residues: MNIIKTGIKQSLVSGIYSKVGIRAFCTHYSAELEWVKLSDDNKVATVGLSSFGAQRLGKINYVELPKEHRKCRREEKFGVLESSNATAFGLYAPVSGEVLEVNEKLKKSPSLLNEDPANNWMVKFKVSKPDEFKKLMDSNKYKKFVQWYR.

The region spanning 44–126 is the Lipoyl-binding domain; the sequence is VATVGLSSFG…PANNWMVKFK (83 aa).

Belongs to the GcvH family.

The protein is Glycine cleavage system H-like protein gcvH2 (gcvH2) of Dictyostelium discoideum (Social amoeba).